Reading from the N-terminus, the 415-residue chain is Multifunctional CCA protein (415 aa).

Positions 8 and 11 each coordinate ATP. CTP contacts are provided by G8 and R11. E21 and D23 together coordinate Mg(2+). 3 residues coordinate ATP: R91, R137, and R140. The CTP site is built by R91, R137, and R140. Residues 228-329 (AGTHTLMALD…VELFEGLDLF (102 aa)) enclose the HD domain.

The protein belongs to the tRNA nucleotidyltransferase/poly(A) polymerase family. Bacterial CCA-adding enzyme type 1 subfamily. As to quaternary structure, monomer. Can also form homodimers and oligomers. Mg(2+) is required as a cofactor. Requires Ni(2+) as cofactor.

The enzyme catalyses a tRNA precursor + 2 CTP + ATP = a tRNA with a 3' CCA end + 3 diphosphate. It carries out the reaction a tRNA with a 3' CCA end + 2 CTP + ATP = a tRNA with a 3' CCACCA end + 3 diphosphate. Catalyzes the addition and repair of the essential 3'-terminal CCA sequence in tRNAs without using a nucleic acid template. Adds these three nucleotides in the order of C, C, and A to the tRNA nucleotide-73, using CTP and ATP as substrates and producing inorganic pyrophosphate. tRNA 3'-terminal CCA addition is required both for tRNA processing and repair. Also involved in tRNA surveillance by mediating tandem CCA addition to generate a CCACCA at the 3' terminus of unstable tRNAs. While stable tRNAs receive only 3'-terminal CCA, unstable tRNAs are marked with CCACCA and rapidly degraded. The protein is Multifunctional CCA protein of Halorhodospira halophila (strain DSM 244 / SL1) (Ectothiorhodospira halophila (strain DSM 244 / SL1)).